A 239-amino-acid polypeptide reads, in one-letter code: Leucine rich adaptor protein 1 (239 aa).

2 LRR repeats span residues 55–83 and 93–114; these read LGDK…LVTL and LLEE…QYSL. Low complexity predominate over residues 107 to 118; it reads LTSSQYSLTGGS. The segment at 107–140 is disordered; sequence LTSSQYSLTGGSPERSRRGSWDSLPDTSSTDRLD. Serine 118, serine 126, and serine 129 each carry phosphoserine.

In terms of assembly, forms a tripartite complex with CDC42BPA/CDC42BPB and MYO18A acting as an adapter connecting both. Its binding to CDC42BPA/CDC42BPB results in their activation by abolition of their negative autoregulation. Interacts with CDC42BPA and CDC42BPB. Post-translationally, phosphorylated.

It is found in the cytoplasm. Its function is as follows. Acts as an activator of the canonical NF-kappa-B pathway and drive the production of pro-inflammatory cytokines. Promotes the antigen (Ag)-presenting and priming function of dendritic cells via the canonical NF-kappa-B pathway. In concert with MYO18A and CDC42BPA/CDC42BPB, is involved in modulating lamellar actomyosin retrograde flow that is crucial to cell protrusion and migration. Activates CDC42BPA/CDC42BPB and targets it to actomyosin through its interaction with MYO18A, leading to MYL9/MLC2 phosphorylation and MYH9/MYH10-dependent actomyosin assembly in the lamella. The protein is Leucine rich adaptor protein 1 (Lurap1) of Rattus norvegicus (Rat).